The following is a 215-amino-acid chain: LexA repressor (215 aa).

The segment at residues 28 to 48 (RAEIAAELGFSSPNAAEEHLR) is a DNA-binding region (H-T-H motif). Residues Ser133 and Lys170 each act as for autocatalytic cleavage activity in the active site.

It belongs to the peptidase S24 family. Homodimer.

It carries out the reaction Hydrolysis of Ala-|-Gly bond in repressor LexA.. Its function is as follows. Represses a number of genes involved in the response to DNA damage (SOS response), including recA and lexA. In the presence of single-stranded DNA, RecA interacts with LexA causing an autocatalytic cleavage which disrupts the DNA-binding part of LexA, leading to derepression of the SOS regulon and eventually DNA repair. The chain is LexA repressor from Burkholderia cenocepacia (strain HI2424).